A 90-amino-acid polypeptide reads, in one-letter code: Evasin P1126 (90 aa).

The first 25 residues, 1–25 (MTSHSAVRIAIFAVIALHSIFECLS), serve as a signal peptide directing secretion. 3 disulfides stabilise this stretch: cysteine 46–cysteine 62, cysteine 50–cysteine 64, and cysteine 58–cysteine 75. Asparagine 55 carries N-linked (GlcNAc...) asparagine glycosylation. The N-linked (GlcNAc...) asparagine glycan is linked to asparagine 77.

It is found in the secreted. Salivary chemokine-binding protein which binds to host chemokines CXCL1, CXCL2, CXCL3, CXCL4, CXCL5, CXCL6, CXCL7, CXCL10 and CXCL11. In Amblyomma cajennense (Cayenne tick), this protein is Evasin P1126.